A 295-amino-acid polypeptide reads, in one-letter code: 33 kDa chaperonin (295 aa).

Cystine bridges form between C230/C232 and C264/C267.

This sequence belongs to the HSP33 family. In terms of processing, under oxidizing conditions two disulfide bonds are formed involving the reactive cysteines. Under reducing conditions zinc is bound to the reactive cysteines and the protein is inactive.

The protein localises to the cytoplasm. Its function is as follows. Redox regulated molecular chaperone. Protects both thermally unfolding and oxidatively damaged proteins from irreversible aggregation. Plays an important role in the bacterial defense system toward oxidative stress. The polypeptide is 33 kDa chaperonin (Ectopseudomonas mendocina (strain ymp) (Pseudomonas mendocina)).